The primary structure comprises 302 residues: Protoheme IX farnesyltransferase 2 (302 aa).

9 consecutive transmembrane segments (helical) span residues 14 to 34 (IIFGNLISAAGGFLLAAQGSV), 36 to 56 (WWLLAATVVGLSLVVASGCAI), 85 to 105 (AALAHGVVLGLAGFALLWFCT), 108 to 128 (LATGCVLFGFVIYVGVYSLYM), 133 to 153 (VYGTLVGSLSGAVPPVAGYCA), 163 to 183 (AILLLMFSLWQMPHSYAIAIF), 209 to 229 (IVLYILAFAAATVMLVFGGYA), 230 to 250 (GYGYLAVAVATSLWWLKMALS), and 264 to 284 (QVFFFSIITITSLSVMMAVDG).

It belongs to the UbiA prenyltransferase family. Protoheme IX farnesyltransferase subfamily.

It is found in the cell inner membrane. It carries out the reaction heme b + (2E,6E)-farnesyl diphosphate + H2O = Fe(II)-heme o + diphosphate. It functions in the pathway porphyrin-containing compound metabolism; heme O biosynthesis; heme O from protoheme: step 1/1. Functionally, converts heme B (protoheme IX) to heme O by substitution of the vinyl group on carbon 2 of heme B porphyrin ring with a hydroxyethyl farnesyl side group. This is Protoheme IX farnesyltransferase 2 from Chromobacterium violaceum (strain ATCC 12472 / DSM 30191 / JCM 1249 / CCUG 213 / NBRC 12614 / NCIMB 9131 / NCTC 9757 / MK).